We begin with the raw amino-acid sequence, 451 residues long: Tubulin alpha-1B chain (451 aa).

The short motif at 1–4 is the MREC motif element; it reads MREC. The GTP site is built by glycine 10, glutamine 11, alanine 12, and glutamine 15. The residue at position 40 (lysine 40) is an N6,N6,N6-trimethyllysine; alternate. An N6-acetyllysine; alternate modification is found at lysine 40. Residue serine 48 is modified to Phosphoserine. The GTP site is built by glutamate 71, alanine 99, serine 140, glycine 143, glycine 144, threonine 145, glycine 146, threonine 179, glutamate 183, asparagine 206, tyrosine 224, and asparagine 228. Mg(2+) is bound at residue glutamate 71. The residue at position 232 (serine 232) is a Phosphoserine. Leucine 252 contacts GTP. The active site involves glutamate 254. Tyrosine 282 carries the 3'-nitrotyrosine modification. Lysine 326 participates in a covalent cross-link: Glycyl lysine isopeptide (Lys-Gly) (interchain with G-Cter in ubiquitin). Arginine 339 carries the post-translational modification Omega-N-methylarginine. Lysine 370 participates in a covalent cross-link: Glycyl lysine isopeptide (Lys-Gly) (interchain with G-Cter in ubiquitin). At serine 439 the chain carries Phosphoserine. 2 positions are modified to 5-glutamyl polyglutamate: glutamate 443 and glutamate 445. Residue tyrosine 451 is modified to 3'-nitrotyrosine.

The protein belongs to the tubulin family. In terms of assembly, heterodimer of alpha- and beta-tubulin. A typical microtubule is a hollow water-filled tube with an outer diameter of 25 nm and an inner diameter of 15 nM. Alpha-beta heterodimers associate head-to-tail to form protofilaments running lengthwise along the microtubule wall with the beta-tubulin subunit facing the microtubule plus end conferring a structural polarity. Microtubules usually have 13 protofilaments but different protofilament numbers can be found in some organisms and specialized cells. Interacts with gamma-tubulin; the interaction allows microtubules to nucleate from the gamma-tubulin ring complex (gTuRC). Nascent microtubule interacts (via alpha-tubulin MREC motif) with TTC5/STRAP; this interaction may result in tubulin mRNA-targeted degradation. Component of sperm flagellar doublet microtubules. Requires Mg(2+) as cofactor. Post-translationally, some glutamate residues at the C-terminus are polyglycylated, resulting in polyglycine chains on the gamma-carboxyl group. Glycylation is mainly limited to tubulin incorporated into axonemes (cilia and flagella) whereas glutamylation is prevalent in neuronal cells, centrioles, axonemes, and the mitotic spindle. Both modifications can coexist on the same protein on adjacent residues, and lowering polyglycylation levels increases polyglutamylation, and reciprocally. Cilia and flagella glycylation is required for their stability and maintenance. Flagella glycylation controls sperm motility. In terms of processing, some glutamate residues at the C-terminus are polyglutamylated, resulting in polyglutamate chains on the gamma-carboxyl group. Polyglutamylation plays a key role in microtubule severing by spastin (SPAST). SPAST preferentially recognizes and acts on microtubules decorated with short polyglutamate tails: severing activity by SPAST increases as the number of glutamates per tubulin rises from one to eight, but decreases beyond this glutamylation threshold. Glutamylation is also involved in cilia motility. Acetylation of alpha chains at Lys-40 is located inside the microtubule lumen. This modification has been correlated with increased microtubule stability, intracellular transport and ciliary assembly. Post-translationally, methylation of alpha chains at Lys-40 is found in mitotic microtubules and is required for normal mitosis and cytokinesis contributing to genomic stability. In terms of processing, nitration of Tyr-451 is irreversible and interferes with normal dynein intracellular distribution. Undergoes a tyrosination/detyrosination cycle, the cyclic removal and re-addition of a C-terminal tyrosine residue by the enzymes tubulin tyrosine carboxypeptidase (MATCAP1, VASH1 or VASH2) and tubulin tyrosine ligase (TTL), respectively. Post-translationally, tyrosination promotes microtubule interaction with CAP-Gly domain-containing proteins such as CLIP1, CLIP2 and DCTN1. Tyrosination regulates the initiation of dynein-dynactin motility via interaction with DCTN1, which brings the dynein-dynactin complex into contact with microtubules. In neurons, tyrosinated tubulins mediate the initiation of retrograde vesicle transport. In terms of processing, detyrosination is involved in metaphase plate congression by guiding chromosomes during mitosis: detyrosination promotes interaction with CENPE, promoting pole-proximal transport of chromosomes toward the equator. Detyrosination increases microtubules-dependent mechanotransduction in dystrophic cardiac and skeletal muscle. In cardiomyocytes, detyrosinated microtubules are required to resist to contractile compression during contraction: detyrosination promotes association with desmin (DES) at force-generating sarcomeres, leading to buckled microtubules and mechanical resistance to contraction.

It is found in the cytoplasm. The protein resides in the cytoskeleton. The enzyme catalyses GTP + H2O = GDP + phosphate + H(+). In terms of biological role, tubulin is the major constituent of microtubules, protein filaments consisting of alpha- and beta-tubulin heterodimers. Microtubules grow by the addition of GTP-tubulin dimers to the microtubule end, where a stabilizing cap forms. Below the cap, tubulin dimers are in GDP-bound state, owing to GTPase activity of alpha-tubulin. This Pan troglodytes (Chimpanzee) protein is Tubulin alpha-1B chain (TUBA1B).